The primary structure comprises 343 residues: Probable F-box protein At1g67455 (343 aa).

The region spanning 1-46 is the F-box domain; the sequence is MMISDLPEDMVEEILSRVSIISLGALRWNDLSKARVICKAEARQQF.

The protein is Probable F-box protein At1g67455 of Arabidopsis thaliana (Mouse-ear cress).